Reading from the N-terminus, the 336-residue chain is Isopentenyl-diphosphate delta-isomerase (336 aa).

5–6 (RK) serves as a coordination point for substrate. Residues 60-62 (AMT), Ser90, and Asn117 each bind FMN. Residue Gln147 coordinates substrate. Glu148 is a Mg(2+) binding site. FMN is bound by residues Lys179, Ser204, Thr209, 253 to 255 (GVR), and 274 to 275 (SR).

The protein belongs to the IPP isomerase type 2 family. As to quaternary structure, homooctamer. Dimer of tetramers. FMN serves as cofactor. The cofactor is NADPH. Mg(2+) is required as a cofactor.

Its subcellular location is the cytoplasm. The catalysed reaction is isopentenyl diphosphate = dimethylallyl diphosphate. In terms of biological role, involved in the biosynthesis of isoprenoids. Catalyzes the 1,3-allylic rearrangement of the homoallylic substrate isopentenyl (IPP) to its allylic isomer, dimethylallyl diphosphate (DMAPP). This Streptococcus pneumoniae (strain 70585) protein is Isopentenyl-diphosphate delta-isomerase.